The following is a 435-amino-acid chain: Phosphomethylpyrimidine synthase (435 aa).

Substrate is bound by residues Asn-67, Met-96, Tyr-125, His-163, 185–187 (SRG), 226–229 (DGLR), and Glu-265. His-269 contributes to the Zn(2+) binding site. Tyr-292 provides a ligand contact to substrate. His-333 is a Zn(2+) binding site. Positions 408, 411, and 415 each coordinate [4Fe-4S] cluster.

Belongs to the ThiC family. [4Fe-4S] cluster serves as cofactor.

It catalyses the reaction 5-amino-1-(5-phospho-beta-D-ribosyl)imidazole + S-adenosyl-L-methionine = 4-amino-2-methyl-5-(phosphooxymethyl)pyrimidine + CO + 5'-deoxyadenosine + formate + L-methionine + 3 H(+). It participates in cofactor biosynthesis; thiamine diphosphate biosynthesis. Catalyzes the synthesis of the hydroxymethylpyrimidine phosphate (HMP-P) moiety of thiamine from aminoimidazole ribotide (AIR) in a radical S-adenosyl-L-methionine (SAM)-dependent reaction. The protein is Phosphomethylpyrimidine synthase of Thermus thermophilus (strain ATCC BAA-163 / DSM 7039 / HB27).